We begin with the raw amino-acid sequence, 336 residues long: IgLON family member 5 (336 aa).

Positions 1–30 are cleaved as a signal peptide; that stretch reads MPPPAPGARLRLLAAAALAGLAVISRGLLS. 3 consecutive Ig-like C2-type domains span residues 33–122, 132–213, and 218–307; these read LEFS…QPYT, PARI…VLVT, and PTIT…MRLL. N-linked (GlcNAc...) asparagine glycans are attached at residues asparagine 41, asparagine 49, asparagine 67, and asparagine 137. Cysteine 54 and cysteine 112 form a disulfide bridge. Disulfide bonds link cysteine 154–cysteine 195 and cysteine 238–cysteine 291. An N-linked (GlcNAc...) asparagine glycan is attached at asparagine 288.

It belongs to the immunoglobulin superfamily. IgLON family.

Its subcellular location is the secreted. In Mus musculus (Mouse), this protein is IgLON family member 5 (Iglon5).